An 80-amino-acid polypeptide reads, in one-letter code: MSFEVLEQLESKIQTAVDTITLLQMEVEELKEDKVKLETEANELRSQREELEQKSQQAQQEHAQWQERIRALLGKMDEVE.

Residues 3–80 are a coiled coil; it reads FEVLEQLESK…ALLGKMDEVE (78 aa). The segment covering 41–53 has biased composition (basic and acidic residues); sequence ANELRSQREELEQ. The disordered stretch occupies residues 41-60; sequence ANELRSQREELEQKSQQAQQ.

The protein belongs to the ZapB family. As to quaternary structure, homodimer. The ends of the coiled-coil dimer bind to each other, forming polymers. Interacts with FtsZ.

It localises to the cytoplasm. Non-essential, abundant cell division factor that is required for proper Z-ring formation. It is recruited early to the divisome by direct interaction with FtsZ, stimulating Z-ring assembly and thereby promoting cell division earlier in the cell cycle. Its recruitment to the Z-ring requires functional FtsA or ZipA. This chain is Cell division protein ZapB, found in Vibrio campbellii (strain ATCC BAA-1116).